Here is a 263-residue protein sequence, read N- to C-terminus: Indole-3-glycerol phosphate synthase (263 aa).

Belongs to the TrpC family.

It catalyses the reaction 1-(2-carboxyphenylamino)-1-deoxy-D-ribulose 5-phosphate + H(+) = (1S,2R)-1-C-(indol-3-yl)glycerol 3-phosphate + CO2 + H2O. The protein operates within amino-acid biosynthesis; L-tryptophan biosynthesis; L-tryptophan from chorismate: step 4/5. This chain is Indole-3-glycerol phosphate synthase, found in Acidithiobacillus ferrooxidans (strain ATCC 23270 / DSM 14882 / CIP 104768 / NCIMB 8455) (Ferrobacillus ferrooxidans (strain ATCC 23270)).